A 241-amino-acid chain; its full sequence is DnaA regulatory inactivator Hda (241 aa).

The protein belongs to the DnaA family. HdA subfamily. As to quaternary structure, the active form seems to be an ADP-bound monomer. Forms the RIDA complex (regulatory inactivation of DnaA) of ATP-DnaA, ADP-Hda and the DNA-loaded beta sliding clamp (dnaN).

In terms of biological role, mediates the interaction of DNA replication initiator protein DnaA with DNA polymerase subunit beta sliding clamp (dnaN). Stimulates hydrolysis of ATP-DnaA to ADP-DnaA, rendering DnaA inactive for reinitiation, a process called regulatory inhibition of DnaA or RIDA. In Citrobacter koseri (strain ATCC BAA-895 / CDC 4225-83 / SGSC4696), this protein is DnaA regulatory inactivator Hda.